The sequence spans 240 residues: Uridylate kinase (240 aa).

13-16 (KASG) lines the ATP pocket. Residues 21 to 26 (GAQGFG) are involved in allosteric activation by GTP. Residue glycine 55 coordinates UMP. Residues glycine 56 and arginine 60 each contribute to the ATP site. Residues aspartate 75 and 136–143 (TGNPFFTT) each bind UMP. ATP is bound by residues threonine 163, glutamine 164, tyrosine 169, and aspartate 172.

This sequence belongs to the UMP kinase family. In terms of assembly, homohexamer.

The protein resides in the cytoplasm. The catalysed reaction is UMP + ATP = UDP + ADP. It participates in pyrimidine metabolism; CTP biosynthesis via de novo pathway; UDP from UMP (UMPK route): step 1/1. Its activity is regulated as follows. Allosterically activated by GTP. Inhibited by UTP. In terms of biological role, catalyzes the reversible phosphorylation of UMP to UDP. This chain is Uridylate kinase, found in Rhizobium etli (strain ATCC 51251 / DSM 11541 / JCM 21823 / NBRC 15573 / CFN 42).